Consider the following 1451-residue polypeptide: Murinoglobulin-2 (1451 aa).

The first 27 residues, 1 to 27 (MWKSRRAQLCLFSVLLAFLPSASSLNG), serve as a signal peptide directing secretion. Intrachain disulfides connect C48–C86, C251–C276, and C269–C288. N-linked (GlcNAc...) asparagine glycosylation is present at N55. N-linked (GlcNAc...) asparagine glycans are attached at residues N294, N313, and N500. 3 cysteine pairs are disulfide-bonded: C461/C555, C587/C773, and C634/C680. Positions 677–734 (PKICFDSAPMSGPRGKFDLAFSSEVSGTLQKGSSKRPQPEEPPREDPPPKDPLAETIR) are bait region. The interval 703–728 (GTLQKGSSKRPQPEEPPREDPPPKDP) is disordered. Residues 713–728 (PQPEEPPREDPPPKDP) are compositionally biased toward basic and acidic residues. N-linked (GlcNAc...) asparagine glycans are attached at residues N749, N776, and N871. Intrachain disulfides connect C849–C885, C923–C1274, C1081–C1104, and C1298–C1444. Positions 974–977 (CGEQ) form a cross-link, isoglutamyl cysteine thioester (Cys-Gln). N-linked (GlcNAc...) asparagine glycosylation is present at N1401.

The protein belongs to the protease inhibitor I39 (alpha-2-macroglobulin) family. Monomer. Plasma.

The protein resides in the secreted. Its function is as follows. A proteinase activates the inhibitor by specific proteolysis in the bait region, which, by an unknown mechanism leads to reaction at the cysteinyl-glutamyl internal thiol ester site and to a conformational change, whereby the proteinase is trapped and/or covalently bound to the inhibitor. While in the tetrameric proteinase inhibitors steric inhibition is sufficiently strong, monomeric forms need a covalent linkage between the activated glutamyl residue of the original thiol ester and a terminal amino group of a lysine or another nucleophilic group on the proteinase, for inhibition to be effective. The protein is Murinoglobulin-2 (Mug2) of Mus musculus (Mouse).